The sequence spans 396 residues: MKAVKSERERGSRRRHRDGDVVLPAGVVVKQERLSPEVAPPAHRRPDHSGGSPSPPTSEPARSGHRGNRARGVSRSPPKKKNKASGRRSKSPRSKRNRSPHHSTVKVKQEREDHPRRGREDRQHREPSEQEHRRARNSDRDRHRGHSHQRRTSNERPGSGQGQGRDRDTQNLQAQEEEREFYNARRREHRQRNDVGGGGSESQELVPRPGGNNKEKEVPAKEKPSFELSGALLEDTNTFRGVVIKYSEPPEARIPKKRWRLYPFKNDEVLPVMYIHRQSAYLLGRHRRIADIPIDHPSCSKQHAVFQYRLVEYTRADGTVGRRVKPYIIDLGSGNGTFLNNKRIEPQRYYELKEKDVLKFGFSSREYVLLHESSDTSEIDRKDDEDEEEEEEVSDS.

Over residues Met-1–Arg-10 the composition is skewed to basic and acidic residues. The segment at Met-1–Glu-227 is disordered. Lys-30 is covalently cross-linked (Glycyl lysine isopeptide (Lys-Gly) (interchain with G-Cter in SUMO); alternate). Residue Lys-30 forms a Glycyl lysine isopeptide (Lys-Gly) (interchain with G-Cter in SUMO1); alternate linkage. Lys-30 is covalently cross-linked (Glycyl lysine isopeptide (Lys-Gly) (interchain with G-Cter in SUMO2); alternate). A phosphoserine mark is found at Ser-35, Ser-49, Ser-52, and Ser-54. Position 57 is a phosphothreonine (Thr-57). 2 positions are modified to phosphoserine: Ser-58 and Ser-99. Residues Pro-77 to Val-105 are compositionally biased toward basic residues. Positions Val-107–Arg-142 are enriched in basic and acidic residues. Residue Lys-108 forms a Glycyl lysine isopeptide (Lys-Gly) (interchain with G-Cter in SUMO2) linkage. Ser-153 is modified (phosphoserine). Positions Arg-165–Gly-196 form a coiled coil. Ser-202 is modified (phosphoserine). Basic and acidic residues predominate over residues Asn-213–Ser-225. A Glycyl lysine isopeptide (Lys-Gly) (interchain with G-Cter in SUMO2) cross-link involves residue Lys-223. One can recognise an FHA domain in the interval Tyr-281–Ile-344. A compositionally biased stretch (basic and acidic residues) spans Ser-373–Lys-382. Positions Ser-373–Ser-396 are disordered. A compositionally biased stretch (acidic residues) spans Asp-383–Ser-396. At Ser-394 the chain carries Phosphoserine.

In terms of assembly, component of activated spliceosome complexes. Component of the minor spliceosome, which splices U12-type introns. Binds SMAD4 and CREBBP/EP300. Binds the SMAD1/OAZ1/PSMB4 complex. Interacts with DROSHA and SMARCA4. Component of the SNARP complex which consists at least of SNIP1, SNW1, THRAP3, BCLAF1 and PNN. In terms of processing, degraded by the proteasome upon binding to the SMAD1/OAZ1/PSMB4 complex. Ubiquitous, with highest expression in heart and skeletal muscle.

Its subcellular location is the nucleus. Its function is as follows. Required for pre-mRNA splicing as component of the spliceosome. As a component of the minor spliceosome, involved in the splicing of U12-type introns in pre-mRNAs. Down-regulates NF-kappa-B signaling by competing with RELA for CREBBP/EP300 binding. Involved in the microRNA (miRNA) biogenesis. May be involved in cyclin-D1/CCND1 mRNA stability through the SNARP complex which associates with both the 3'end of the CCND1 gene and its mRNA. This chain is Smad nuclear-interacting protein 1 (SNIP1), found in Homo sapiens (Human).